An 815-amino-acid polypeptide reads, in one-letter code: Probable AMP deaminase (815 aa).

Residues 5 to 27 (YALHLAVATLLGASFAAASAYYM) form a helical membrane-spanning segment. Disordered stretches follow at residues 53–116 (LLDA…PVPT) and 144–173 (LLTNGTIGSDPLPGKASQNGDTKPVPSTNM). Residues 105-116 (VRPTTPRSPVPT) are compositionally biased toward low complexity. A compositionally biased stretch (polar residues) spans 159-173 (ASQNGDTKPVPSTNM). Histidine 367 and histidine 369 together coordinate Zn(2+). Substrate is bound by residues histidine 369 and 438-443 (KFNLKY). Residue histidine 635 participates in Zn(2+) binding. Residue glutamate 638 coordinates substrate. Histidine 657 functions as the Proton acceptor in the catalytic mechanism. Position 712 (aspartate 712) interacts with Zn(2+). A substrate-binding site is contributed by 713–716 (DPLQ).

Belongs to the metallo-dependent hydrolases superfamily. Adenosine and AMP deaminases family. Homodimer. The cofactor is Zn(2+).

It is found in the membrane. The enzyme catalyses AMP + H2O + H(+) = IMP + NH4(+). The protein operates within purine metabolism; IMP biosynthesis via salvage pathway; IMP from AMP: step 1/1. AMP deaminase plays a critical role in energy metabolism. The sequence is that of Probable AMP deaminase (AMPD) from Oryza sativa subsp. japonica (Rice).